Here is a 389-residue protein sequence, read N- to C-terminus: Phospho-N-acetylmuramoyl-pentapeptide-transferase (389 aa).

The next 10 helical transmembrane spans lie at 25-45 (RAVM…PWVI), 73-93 (TMGG…WGDL), 97-117 (FIWI…VDDY), 135-155 (FWQS…VSEA), 190-210 (ISYP…IVGA), 222-242 (GLVI…AYVM), 258-278 (GAGE…AFLW), 286-306 (VFMG…VAVI), 311-331 (IVLF…MLQV), and 366-386 (QVVV…LSTL).

Belongs to the glycosyltransferase 4 family. MraY subfamily. Mg(2+) serves as cofactor.

It localises to the cell inner membrane. It carries out the reaction UDP-N-acetyl-alpha-D-muramoyl-L-alanyl-gamma-D-glutamyl-meso-2,6-diaminopimeloyl-D-alanyl-D-alanine + di-trans,octa-cis-undecaprenyl phosphate = di-trans,octa-cis-undecaprenyl diphospho-N-acetyl-alpha-D-muramoyl-L-alanyl-D-glutamyl-meso-2,6-diaminopimeloyl-D-alanyl-D-alanine + UMP. Its pathway is cell wall biogenesis; peptidoglycan biosynthesis. Functionally, catalyzes the initial step of the lipid cycle reactions in the biosynthesis of the cell wall peptidoglycan: transfers peptidoglycan precursor phospho-MurNAc-pentapeptide from UDP-MurNAc-pentapeptide onto the lipid carrier undecaprenyl phosphate, yielding undecaprenyl-pyrophosphoryl-MurNAc-pentapeptide, known as lipid I. In Burkholderia multivorans (strain ATCC 17616 / 249), this protein is Phospho-N-acetylmuramoyl-pentapeptide-transferase.